A 476-amino-acid polypeptide reads, in one-letter code: Methylenetetrahydrofolate--tRNA-(uracil-5-)-methyltransferase TrmFO (476 aa).

14 to 19 (GGGLAG) is a binding site for FAD.

Belongs to the MnmG family. TrmFO subfamily. FAD serves as cofactor.

The protein localises to the cytoplasm. The enzyme catalyses uridine(54) in tRNA + (6R)-5,10-methylene-5,6,7,8-tetrahydrofolate + NADH + H(+) = 5-methyluridine(54) in tRNA + (6S)-5,6,7,8-tetrahydrofolate + NAD(+). It carries out the reaction uridine(54) in tRNA + (6R)-5,10-methylene-5,6,7,8-tetrahydrofolate + NADPH + H(+) = 5-methyluridine(54) in tRNA + (6S)-5,6,7,8-tetrahydrofolate + NADP(+). In terms of biological role, catalyzes the folate-dependent formation of 5-methyl-uridine at position 54 (M-5-U54) in all tRNAs. The polypeptide is Methylenetetrahydrofolate--tRNA-(uracil-5-)-methyltransferase TrmFO (Brucella anthropi (strain ATCC 49188 / DSM 6882 / CCUG 24695 / JCM 21032 / LMG 3331 / NBRC 15819 / NCTC 12168 / Alc 37) (Ochrobactrum anthropi)).